Here is a 101-residue protein sequence, read N- to C-terminus: Large ribosomal subunit protein uL24 (101 aa).

This sequence belongs to the universal ribosomal protein uL24 family. As to quaternary structure, part of the 50S ribosomal subunit.

Its function is as follows. One of two assembly initiator proteins, it binds directly to the 5'-end of the 23S rRNA, where it nucleates assembly of the 50S subunit. Functionally, one of the proteins that surrounds the polypeptide exit tunnel on the outside of the subunit. The chain is Large ribosomal subunit protein uL24 from Lactococcus lactis subsp. lactis (strain IL1403) (Streptococcus lactis).